The following is a 97-amino-acid chain: Large ribosomal subunit protein bL27 (97 aa).

A propeptide spanning residues M1 to F9 is cleaved from the precursor.

It belongs to the bacterial ribosomal protein bL27 family. The N-terminus is cleaved by ribosomal processing cysteine protease Prp.

The sequence is that of Large ribosomal subunit protein bL27 from Syntrophomonas wolfei subsp. wolfei (strain DSM 2245B / Goettingen).